A 373-amino-acid chain; its full sequence is Flagellar P-ring protein (373 aa).

The first 30 residues, 1–30 (MTNRWSFDVKKNLVTLILTWLCLSISTAQA), serve as a signal peptide directing secretion.

Belongs to the FlgI family. As to quaternary structure, the basal body constitutes a major portion of the flagellar organelle and consists of four rings (L,P,S, and M) mounted on a central rod.

It localises to the periplasm. The protein resides in the bacterial flagellum basal body. Assembles around the rod to form the L-ring and probably protects the motor/basal body from shearing forces during rotation. This Aliivibrio salmonicida (strain LFI1238) (Vibrio salmonicida (strain LFI1238)) protein is Flagellar P-ring protein.